The following is a 135-amino-acid chain: Histone H2A (135 aa).

This sequence belongs to the histone H2A family. In terms of assembly, the nucleosome is a histone octamer containing two molecules each of H2A, H2B, H3 and H4 assembled in one H3-H4 heterotetramer and two H2A-H2B heterodimers. The octamer wraps approximately 147 bp of DNA.

The protein resides in the nucleus. Its subcellular location is the chromosome. Core component of nucleosome. Nucleosomes wrap and compact DNA into chromatin, limiting DNA accessibility to the cellular machineries which require DNA as a template. Histones thereby play a central role in transcription regulation, DNA repair, DNA replication and chromosomal stability. DNA accessibility is regulated via a complex set of post-translational modifications of histones, also called histone code, and nucleosome remodeling. This is Histone H2A from Trypanosoma cruzi.